A 228-amino-acid chain; its full sequence is MKALRAVLLILLLSGQPGSGWAQEDGDADPEPENYNYDDDDDEEEEEETNMIPGSRDRAPLQCYFCQVLHSGESCNQTQSCSSSKPFCITLVSHSGTDKGYLTTYSMWCTDTCQPIIKTVGGTQMTQTCCQSTLCNIPPWQNPQVQNPLGGRADSPLESGTRHPQGGKFSHPQVVKAAHPQSDGANLPKSGKANQPQGSGAGYPSGWTKFGNIALLLSFFTCLWASGA.

A signal peptide spans 1-22 (MKALRAVLLILLLSGQPGSGWA). The tract at residues 21-32 (WAQEDGDADPEP) is disordered. Residues 24 to 48 (EDGDADPEPENYNYDDDDDEEEEEE) form an important for LPL transport to the lumenal surface of endothelial cells region. Over residues 24–49 (EDGDADPEPENYNYDDDDDEEEEEET) the composition is skewed to acidic residues. A Sulfotyrosine modification is found at tyrosine 35. In terms of domain architecture, UPAR/Ly6 spans 61–148 (LQCYFCQVLH…PWQNPQVQNP (88 aa)). Cystine bridges form between cysteine 63/cysteine 88, cysteine 66/cysteine 75, cysteine 81/cysteine 109, cysteine 113/cysteine 129, and cysteine 130/cysteine 135. Asparagine 76 carries N-linked (GlcNAc...) asparagine glycosylation. The tract at residues 102 to 108 (LTTYSMW) is important for interaction with LPL. The segment at 145-200 (VQNPLGGRADSPLESGTRHPQGGKFSHPQVVKAAHPQSDGANLPKSGKANQPQGSG) is disordered. A lipid anchor (GPI-anchor amidated glycine) is attached at glycine 198. Positions 199 to 228 (SGAGYPSGWTKFGNIALLLSFFTCLWASGA) are cleaved as a propeptide — removed in mature form.

In terms of assembly, mostly monomer, but also homodimer and homooligomer. Interacts with lipoprotein lipase (LPL). Interacts with high affinity with high-density lipoprotein (HDL). Interacts with chylomicrons. Interacts with APOA5. In terms of processing, glycosylation of Asn-76 is critical for cell surface localization. Sulfation of a Tyr in the N-terminal acidic region increases the affinity for LPL. In terms of tissue distribution, detected in fat tissue. Detected on the luminal surface of capillary endothelial cells in heart, skeletal muscle and brown adipose tissue (at protein level). Detected in heart and brown adipose tissue. Expressed at lower levels in lung and liver.

The protein resides in the apical cell membrane. It localises to the basolateral cell membrane. Its subcellular location is the cell membrane. Functionally, mediates the transport of lipoprotein lipase LPL from the basolateral to the apical surface of endothelial cells in capillaries. Anchors LPL on the surface of endothelial cells in the lumen of blood capillaries. Thereby, plays an important role in lipolytic processing of chylomicrons by LPL, triglyceride metabolism and lipid homeostasis. Binds chylomicrons and phospholipid particles that contain APOA5. Binds high-density lipoprotein (HDL) and plays a role in the uptake of lipids from HDL. The protein is Glycosylphosphatidylinositol-anchored high density lipoprotein-binding protein 1 of Mus musculus (Mouse).